The primary structure comprises 355 residues: Probable F-box protein At5g36000 (355 aa).

A compositionally biased stretch (basic and acidic residues) spans 1–14 (MNTRSGDAEGDIRG). A disordered region spans residues 1–44 (MNTRSGDAEGDIRGKMIAPVRDGNGGQKRKLVQSNDIQRDEDGG). The region spanning 78-124 (QSRFSWYEQDIWTYITRFLDGKSLVKLGATNKWFYKIAMEDTVWRFA) is the F-box; degenerate domain.

The chain is Probable F-box protein At5g36000 from Arabidopsis thaliana (Mouse-ear cress).